The sequence spans 183 residues: Abscisic acid receptor PYL10 (183 aa).

The interval 20–172 (HELVESQCSS…NLNSLADVTE (153 aa)) is START-like. A disulfide bridge links cysteine 27 with cysteine 153. Abscisate is bound by residues lysine 56, 85–90 (ATKSTE), 112–118 (RLKNYSS), and glutamate 137. The Gate loop signature appears at 81 to 85 (SGLPA). The short motif at 111–113 (HRL) is the Latch loop element.

Belongs to the PYR/PYL/RCAR abscisic acid intracellular receptor family. As to quaternary structure, monomer. Forms heterodimer with PYL13, thus antagonizing PP2Cs-binding and ABA-independent inhibition of PP2Cs. Homodimer. Binds ABA on one subunit only. Binds to CARs protein in an ABA-independent manner, both at the plasma membrane and in the nucleus. Interacts with ABI1 and HAB1, and possibly with other PP2Cs, in an ABA-independent manner.

Its subcellular location is the cytoplasm. It localises to the nucleus. The protein localises to the cell membrane. In terms of biological role, receptor for abscisic acid (ABA) required for ABA-mediated responses such as stomatal closure and germination inhibition. Inhibits the activity of group-A protein phosphatases type 2C (PP2Cs) in an ABA-independent manner but more efficiently when activated by ABA. Can be activated by both (-)-ABA and (+)-ABA. This is Abscisic acid receptor PYL10 (PYL10) from Arabidopsis thaliana (Mouse-ear cress).